The sequence spans 97 residues: Conotoxin Cal6.1b (97 aa).

Residues 1–22 form the signal peptide; it reads MKLTTVLVVALLVLAACQFTVT. Residues 22 to 46 form a disordered region; that stretch reads TDNSGDDPENPSLRSAGENQNPDST. Positions 23-68 are excised as a propeptide; it reads DNSGDDPENPSLRSAGENQNPDSTKTITAWATRDMTNMRRGLNRPS. 3 disulfide bridges follow: C71-C87, C78-C91, and C86-C96.

It belongs to the conotoxin O1 superfamily. As to expression, expressed by the venom duct.

The protein localises to the secreted. Functionally, probable neurotoxin with unknown target. Possibly targets ion channels. In Californiconus californicus (California cone), this protein is Conotoxin Cal6.1b.